Reading from the N-terminus, the 551-residue chain is Cleavage and polyadenylation specificity factor subunit 6 (551 aa).

The segment at 1-213 is necessary for interaction with NXF1; it reads MADGVDHIDI…RGRFPGAVPG (213 aa). One can recognise an RRM domain in the interval 81–161; the sequence is IALYIGNLTW…QSPVVTPCNK (81 aa). The interval 81 to 161 is necessary for interaction with NUDT21/CPSF5; sequence IALYIGNLTW…QSPVVTPCNK (81 aa). The interval 81 to 161 is necessary for nuclear paraspeckles localization; sequence IALYIGNLTW…QSPVVTPCNK (81 aa). A Phosphothreonine modification is found at threonine 157. Over residues 169–180 the composition is skewed to polar residues; the sequence is MQSRKTTQSGQM. 2 disordered regions span residues 169–411 and 477–551; these read MQSR…PLSE and LHGI…YRHR. Residues 184–193 are compositionally biased toward gly residues; it reads GKAGPPGGGS. Positions 202–206 match the GAR motif; it reads RGRGR. Residues 207 to 219 are compositionally biased toward low complexity; that stretch reads FPGAVPGGDRFPG. 3 stretches are compositionally biased toward pro residues: residues 220-265, 285-366, and 377-388; these read PAGP…PLAG, GQPP…PPPT, and GPPPTDPYGRPP. Basic and acidic residues predominate over residues 389–404; that stretch reads PYDRGDYGPPGREMDT. 2 positions are modified to phosphothreonine: threonine 404 and threonine 407. A sufficient for nuclear speckle localization region spans residues 404–551; the sequence is TARTPLSEAE…RDREREYRHR (148 aa). Positions 405-551 are necessary for RNA-binding; that stretch reads ARTPLSEAEF…RDREREYRHR (147 aa). Positions 481–551 are necessary for interaction with SRSF3, SRSF7 and TRA2B/SFRS10; that stretch reads ESKSYGSGSR…RDREREYRHR (71 aa). A compositionally biased stretch (basic and acidic residues) spans 489 to 503; the sequence is SRRERSRERDHSRSR. An arg/Ser-rich domain region spans residues 490-551; it reads RRERSRERDH…RDREREYRHR (62 aa). Residues serine 494, serine 500, serine 511, serine 513, and serine 525 each carry the phosphoserine modification. Over residues 504 to 514 the composition is skewed to basic residues; the sequence is EKSRRHKSRSR. The sufficient for nuclear targeting stretch occupies residues 510-551; sequence KSRSRDRHDDYYRERSRERERHRDRDRDRDRERDREREYRHR. Positions 515–551 are enriched in basic and acidic residues; it reads DRHDDYYRERSRERERHRDRDRDRDRERDREREYRHR.

It belongs to the RRM CPSF6/7 family. Component of the cleavage factor Im (CFIm) complex which is a heterotetramer composed of two subunits of NUDT21/CPSF5 and two subunits of CPSF6 or CPSF7 or a heterodimer of CPSF6 and CPSF7. The cleavage factor Im (CFIm) complex associates with the CPSF and CSTF complexes to promote the assembly of the core mRNA 3'-processing machinery. Associates with the exon junction complex (EJC). Associates with the 80S ribosome particle. Interacts (via the RRM domain) with NUDT21/CPSF5; this interaction is direct and enhances binding to RNA. Interacts (via Arg/Ser-rich domain) with FIP1L1 (preferentially via unphosphorylated form and Arg/Glu/Asp-rich domain); this interaction mediates, at least in part, the interaction between the CFIm and CPSF complexes and may be inhibited by CPSF6 hyper-phosphorylation. Interacts (via N-terminus) with NXF1; this interaction is direct. Interacts with SRSF3. Interacts with SRSF7. Interacts with SNRNP70. Interacts with TRA2B/SFRS10. Interacts with UPF1. Interacts with UPF3B. Interacts with VIRMA. Interacts (via Arg/Ser-rich domain) with TNPO3; promoting nuclear import of CPSF6 independently of its phosphorylation status. Interacts with YTHDC1. Post-translationally, phosphorylated. Phosphorylated in the Arg/Ser-rich domain by SRPK1, in vitro. In terms of processing, symmetrically dimethylated on arginine residues by PRMT5 in a WDR77- and CLNS1A-dependent manner. Asymmetrically dimethylated on arginine residues by PRMT1. Symmetrically dimethylated on arginine residues in the GAR motif by PRMT5 in a WDR77- and CLNS1A-dependent manner. Asymmetrically dimethylated on arginine residues in the GAR motif by PRMT1. Expressed in testis. Expressed in male germ cells (at protein level).

Its subcellular location is the nucleus. It localises to the nucleoplasm. The protein resides in the nucleus speckle. The protein localises to the cytoplasm. Functionally, component of the cleavage factor Im (CFIm) complex that functions as an activator of the pre-mRNA 3'-end cleavage and polyadenylation processing required for the maturation of pre-mRNA into functional mRNAs. CFIm contributes to the recruitment of multiprotein complexes on specific sequences on the pre-mRNA 3'-end, so called cleavage and polyadenylation signals (pA signals). Most pre-mRNAs contain multiple pA signals, resulting in alternative cleavage and polyadenylation (APA) producing mRNAs with variable 3'-end formation. The CFIm complex acts as a key regulator of cleavage and polyadenylation site choice during APA through its binding to 5'-UGUA-3' elements localized in the 3'-untranslated region (UTR) for a huge number of pre-mRNAs. CPSF6 enhances NUDT21/CPSF5 binding to 5'-UGUA-3' elements localized upstream of pA signals and promotes RNA looping, and hence activates directly the mRNA 3'-processing machinery. Plays a role in mRNA export. This chain is Cleavage and polyadenylation specificity factor subunit 6, found in Mus musculus (Mouse).